A 306-amino-acid polypeptide reads, in one-letter code: Bifunctional protein FolD 1 (306 aa).

NADP(+)-binding positions include 168 to 170, Ser193, and Ile234; that span reads GRS.

The protein belongs to the tetrahydrofolate dehydrogenase/cyclohydrolase family. Homodimer.

It catalyses the reaction (6R)-5,10-methylene-5,6,7,8-tetrahydrofolate + NADP(+) = (6R)-5,10-methenyltetrahydrofolate + NADPH. The catalysed reaction is (6R)-5,10-methenyltetrahydrofolate + H2O = (6R)-10-formyltetrahydrofolate + H(+). It functions in the pathway one-carbon metabolism; tetrahydrofolate interconversion. Functionally, catalyzes the oxidation of 5,10-methylenetetrahydrofolate to 5,10-methenyltetrahydrofolate and then the hydrolysis of 5,10-methenyltetrahydrofolate to 10-formyltetrahydrofolate. The chain is Bifunctional protein FolD 1 from Rhizobium meliloti (strain 1021) (Ensifer meliloti).